Consider the following 103-residue polypeptide: UPF0473 protein LCA_0390 (103 aa).

The protein belongs to the UPF0473 family.

In Latilactobacillus sakei subsp. sakei (strain 23K) (Lactobacillus sakei subsp. sakei), this protein is UPF0473 protein LCA_0390.